The sequence spans 343 residues: Pyridoxal 5'-phosphate synthase subunit PDX1 (343 aa).

Residue aspartate 73 coordinates D-ribose 5-phosphate. Lysine 130 functions as the Schiff-base intermediate with D-ribose 5-phosphate in the catalytic mechanism. Glycine 202 lines the D-ribose 5-phosphate pocket. Glutamine 214 serves as a coordination point for D-glyceraldehyde 3-phosphate. D-ribose 5-phosphate contacts are provided by residues glycine 263 and 284–285 (GS).

It belongs to the PdxS/SNZ family.

It catalyses the reaction aldehydo-D-ribose 5-phosphate + D-glyceraldehyde 3-phosphate + L-glutamine = pyridoxal 5'-phosphate + L-glutamate + phosphate + 3 H2O + H(+). It functions in the pathway cofactor biosynthesis; pyridoxal 5'-phosphate biosynthesis. Functionally, catalyzes the formation of pyridoxal 5'-phosphate from ribose 5-phosphate (RBP), glyceraldehyde 3-phosphate (G3P) and ammonia. The ammonia is provided by PDX2. Can also use ribulose 5-phosphate and dihydroxyacetone phosphate as substrates, resulting from enzyme-catalyzed isomerization of RBP and G3P, respectively. Also plays an indirect role in resistance to singlet oxygen-generating photosensitizers. This is Pyridoxal 5'-phosphate synthase subunit PDX1 (PDX1) from Cercospora nicotianae (Barn spot disease fungus).